The sequence spans 367 residues: Ferrochelatase (367 aa).

Fe cation is bound by residues His226 and Glu307.

This sequence belongs to the ferrochelatase family.

The protein localises to the cytoplasm. It carries out the reaction heme b + 2 H(+) = protoporphyrin IX + Fe(2+). It functions in the pathway porphyrin-containing compound metabolism; protoheme biosynthesis; protoheme from protoporphyrin-IX: step 1/1. Functionally, catalyzes the ferrous insertion into protoporphyrin IX. In Burkholderia mallei (strain NCTC 10247), this protein is Ferrochelatase.